Consider the following 383-residue polypeptide: ATP phosphoribosyltransferase regulatory subunit (383 aa).

It belongs to the class-II aminoacyl-tRNA synthetase family. HisZ subfamily. Heteromultimer composed of HisG and HisZ subunits.

The protein resides in the cytoplasm. It participates in amino-acid biosynthesis; L-histidine biosynthesis; L-histidine from 5-phospho-alpha-D-ribose 1-diphosphate: step 1/9. Its function is as follows. Required for the first step of histidine biosynthesis. May allow the feedback regulation of ATP phosphoribosyltransferase activity by histidine. In Paraburkholderia phytofirmans (strain DSM 17436 / LMG 22146 / PsJN) (Burkholderia phytofirmans), this protein is ATP phosphoribosyltransferase regulatory subunit.